Consider the following 924-residue polypeptide: Exocyst complex component 2 (924 aa).

The IPT/TIG domain maps to 8 to 93 (PLVTGISPNE…GTSTVSFKLL (86 aa)). Positions 240 to 260 (QKLENVLNRASNTADTLFQEV) form a coiled coil. Residues S431, S432, and S435 each carry the phosphoserine modification. T440 is subject to Phosphothreonine. K454 is subject to N6-acetyllysine.

The protein belongs to the SEC5 family. In terms of assembly, the exocyst complex is composed of EXOC1, EXOC2, EXOC3, EXOC4, EXOC5, EXOC6, EXOC7 and EXOC8. Interacts with EXOC3L1. Interacts with GNEFR/DELGEF; this interaction occurs only in the presence of magnesium or manganese and is stimulated by dCTP or GTP. Interacts with RALA and RALB. Interacts with ARL13B; regulates ARL13B localization to the cilium membrane.

The protein localises to the midbody. Its subcellular location is the midbody ring. Its function is as follows. Component of the exocyst complex involved in the docking of exocytic vesicles with fusion sites on the plasma membrane. This chain is Exocyst complex component 2 (Exoc2), found in Mus musculus (Mouse).